The primary structure comprises 774 residues: Formin-like protein 13 (774 aa).

The first 22 residues, 1 to 22 (MRRRVALSTAIALLVGAQLCVA), serve as a signal peptide directing secretion. Over residues 51–67 (PPPPMSGSEAVPPPPPA) the composition is skewed to pro residues. Residues 51–78 (PPPPMSGSEAVPPPPPAAAASATTGGGR) form a disordered region. Residues 68–78 (AAASATTGGGR) are compositionally biased toward low complexity. The chain crosses the membrane as a helical span at residues 89–109 (IALSAGLVALAVASYSCCLLL). Disordered regions lie at residues 130-163 (AAAA…DAIY), 176-338 (HEKS…HLKP), 374-402 (FLNS…RRLL), and 740-774 (GSGK…SSSS). A compositionally biased stretch (pro residues) spans 194–216 (DLRPLPPLKRPESQPPPPPPSTP). Residues 242 to 261 (SSFSRSTSQHSTLEQTAMPP) show a composition bias toward low complexity. Over residues 262–286 (MAAPAPPQTNPPRPVRPPPPPPPPR) the composition is skewed to pro residues. The FH2 domain maps to 326–749 (GAARPPKPPH…GSGKSFRVPA (424 aa)).

Belongs to the formin-like family. Class-I subfamily.

It is found in the membrane. The protein is Formin-like protein 13 (FH13) of Oryza sativa subsp. japonica (Rice).